The chain runs to 678 residues: Zinc finger protein 334 (678 aa).

In terms of domain architecture, KRAB spans V8–E79. 14 C2H2-type zinc fingers span residues N235–H257, Y263–H285, Y291–H313, Y319–H341, Y347–H369, N375–H397, Y403–H425, Y431–H453, Y459–H481, Y542–H564, Y570–H592, Y598–H620, Y626–H648, and Y654–H676.

This sequence belongs to the krueppel C2H2-type zinc-finger protein family.

Its subcellular location is the nucleus. Functionally, may be involved in transcriptional regulation. This Pongo abelii (Sumatran orangutan) protein is Zinc finger protein 334 (ZNF334).